Reading from the N-terminus, the 53-residue chain is Conotoxin Vc5.3 (53 aa).

Residues V1–A15 form the signal peptide. A propeptide spanning residues R16–R41 is cleaved from the precursor.

Belongs to the conotoxin T superfamily. Contains 2 disulfide bonds that can be either 'C1-C3, C2-C4' or 'C1-C4, C2-C3', since these disulfide connectivities have been observed for conotoxins with cysteine framework V (for examples, see AC P0DQQ7 and AC P81755). As to expression, expressed by the venom duct.

It localises to the secreted. This is Conotoxin Vc5.3 from Conus victoriae (Queen Victoria cone).